We begin with the raw amino-acid sequence, 478 residues long: Cysteine--tRNA ligase (478 aa).

A Zn(2+)-binding site is contributed by cysteine 29. The 'HIGH' region motif lies at 31–41 (ATVQSIPHIGH). 3 residues coordinate Zn(2+): cysteine 207, histidine 232, and glutamate 236. Positions 263-267 (KMSKS) match the 'KMSKS' region motif. Lysine 266 contacts ATP.

Belongs to the class-I aminoacyl-tRNA synthetase family. In terms of assembly, monomer. Requires Zn(2+) as cofactor.

The protein resides in the cytoplasm. It carries out the reaction tRNA(Cys) + L-cysteine + ATP = L-cysteinyl-tRNA(Cys) + AMP + diphosphate. This chain is Cysteine--tRNA ligase, found in Corynebacterium jeikeium (strain K411).